The primary structure comprises 338 residues: Glycerol-3-phosphate dehydrogenase [NAD(P)+] (338 aa).

Residues Ser12, Trp13, Arg33, and Lys110 each coordinate NADPH. Lys110, Gly141, and Ser143 together coordinate sn-glycerol 3-phosphate. Ala145 contributes to the NADPH binding site. Sn-glycerol 3-phosphate-binding residues include Lys196, Asp249, Ser259, Arg260, and Asn261. Catalysis depends on Lys196, which acts as the Proton acceptor. Arg260 provides a ligand contact to NADPH. The NADPH site is built by Val284 and Glu286.

This sequence belongs to the NAD-dependent glycerol-3-phosphate dehydrogenase family.

The protein localises to the cytoplasm. It catalyses the reaction sn-glycerol 3-phosphate + NAD(+) = dihydroxyacetone phosphate + NADH + H(+). The enzyme catalyses sn-glycerol 3-phosphate + NADP(+) = dihydroxyacetone phosphate + NADPH + H(+). It participates in membrane lipid metabolism; glycerophospholipid metabolism. Catalyzes the reduction of the glycolytic intermediate dihydroxyacetone phosphate (DHAP) to sn-glycerol 3-phosphate (G3P), the key precursor for phospholipid synthesis. The sequence is that of Glycerol-3-phosphate dehydrogenase [NAD(P)+] from Limosilactobacillus reuteri (strain DSM 20016) (Lactobacillus reuteri).